Reading from the N-terminus, the 347-residue chain is Anthranilate phosphoribosyltransferase (347 aa).

Residues glycine 88, 91 to 92 (GD), threonine 96, 98 to 101 (NIST), 116 to 124 (KHGGRSVSS), and serine 128 each bind 5-phospho-alpha-D-ribose 1-diphosphate. Glycine 88 contributes to the anthranilate binding site. Serine 100 contacts Mg(2+). Arginine 174 is a binding site for anthranilate. Mg(2+) contacts are provided by aspartate 233 and glutamate 234.

Belongs to the anthranilate phosphoribosyltransferase family. As to quaternary structure, homodimer. Requires Mg(2+) as cofactor.

The catalysed reaction is N-(5-phospho-beta-D-ribosyl)anthranilate + diphosphate = 5-phospho-alpha-D-ribose 1-diphosphate + anthranilate. Its pathway is amino-acid biosynthesis; L-tryptophan biosynthesis; L-tryptophan from chorismate: step 2/5. In terms of biological role, catalyzes the transfer of the phosphoribosyl group of 5-phosphorylribose-1-pyrophosphate (PRPP) to anthranilate to yield N-(5'-phosphoribosyl)-anthranilate (PRA). The chain is Anthranilate phosphoribosyltransferase from Polaromonas sp. (strain JS666 / ATCC BAA-500).